Consider the following 93-residue polypeptide: Mammaglobin-A (93 aa).

Positions 1-18 (MKLLMVLMLAALSQHCYA) are cleaved as a signal peptide. N-linked (GlcNAc...) asparagine glycosylation is found at Asn-53 and Asn-68.

Belongs to the secretoglobin family. Lipophilin subfamily. In terms of tissue distribution, mammary gland specific. Over-expressed in breast cancer.

It localises to the secreted. This Homo sapiens (Human) protein is Mammaglobin-A (SCGB2A2).